Consider the following 532-residue polypeptide: Putative cysteine ligase BshC (532 aa).

The stretch at 431-451 forms a coiled coil; sequence MAQAKDALAKVDASLVEAAER.

This sequence belongs to the BshC family.

In Koribacter versatilis (strain Ellin345), this protein is Putative cysteine ligase BshC.